Consider the following 296-residue polypeptide: Mitochondrial arginine transporter BAC2 (296 aa).

Solcar repeat units follow at residues 13 to 93, 104 to 187, and 198 to 282; these read GREF…FSRS, PSYR…VRER, and ENLR…ALRC. 6 consecutive transmembrane segments (helical) span residues 16–36, 70–90, 110–130, 162–181, 204–224, and 260–280; these read FVAGGFGGVAGIISGYPLDTL, AAPLASVTFQNAMVFQIYAIF, ALGGVATGAVQSLLLTPVELI, GLTITVLRDAPAHGLYFWTY, LVAGGLAGVASWVACYPLDVV, and TAVARAFVVNGAIFAAYEVAL.

Belongs to the mitochondrial carrier (TC 2.A.29) family. In terms of tissue distribution, high expression in flowers, stamens, petals and pollen. Expressed in roots, leaves and stems.

It localises to the mitochondrion inner membrane. Its activity is regulated as follows. Inhibited by mercuric chloride. Functionally, mitochondrial arginine transporter that catalyzes the counter-exchange of arginine with lysine, ornithine, arginine, histidine and citrulline. Substrate preference in reconstituted proteoliposomes is arginine &gt; homoarginine &gt; citrulline &gt; histidine &gt; lysine &gt; ornithine. May be involved in the delivery of arginine, released from seed reserves, to mitochondrial arginase and the export of ornithine. May contribute to proline accumulation in response to hyperosmotic stress. This is Mitochondrial arginine transporter BAC2 (BAC2) from Arabidopsis thaliana (Mouse-ear cress).